The primary structure comprises 345 residues: Phosphoribosylformylglycinamidine cyclo-ligase (345 aa).

This sequence belongs to the AIR synthase family.

It localises to the cytoplasm. The enzyme catalyses 2-formamido-N(1)-(5-O-phospho-beta-D-ribosyl)acetamidine + ATP = 5-amino-1-(5-phospho-beta-D-ribosyl)imidazole + ADP + phosphate + H(+). The protein operates within purine metabolism; IMP biosynthesis via de novo pathway; 5-amino-1-(5-phospho-D-ribosyl)imidazole from N(2)-formyl-N(1)-(5-phospho-D-ribosyl)glycinamide: step 2/2. The polypeptide is Phosphoribosylformylglycinamidine cyclo-ligase (Methanopyrus kandleri (strain AV19 / DSM 6324 / JCM 9639 / NBRC 100938)).